We begin with the raw amino-acid sequence, 179 residues long: Large ribosomal subunit protein uL5 (179 aa).

The protein belongs to the universal ribosomal protein uL5 family. As to quaternary structure, part of the 50S ribosomal subunit; part of the 5S rRNA/L5/L18/L25 subcomplex. Contacts the 5S rRNA and the P site tRNA. Forms a bridge to the 30S subunit in the 70S ribosome.

Its function is as follows. This is one of the proteins that bind and probably mediate the attachment of the 5S RNA into the large ribosomal subunit, where it forms part of the central protuberance. In the 70S ribosome it contacts protein S13 of the 30S subunit (bridge B1b), connecting the 2 subunits; this bridge is implicated in subunit movement. Contacts the P site tRNA; the 5S rRNA and some of its associated proteins might help stabilize positioning of ribosome-bound tRNAs. The sequence is that of Large ribosomal subunit protein uL5 from Clostridium botulinum (strain Alaska E43 / Type E3).